A 493-amino-acid polypeptide reads, in one-letter code: Glycogen synthase 1 (493 aa).

K15 lines the ADP-alpha-D-glucose pocket.

The protein belongs to the glycosyltransferase 1 family. Bacterial/plant glycogen synthase subfamily.

It catalyses the reaction [(1-&gt;4)-alpha-D-glucosyl](n) + ADP-alpha-D-glucose = [(1-&gt;4)-alpha-D-glucosyl](n+1) + ADP + H(+). It functions in the pathway glycan biosynthesis; glycogen biosynthesis. Its function is as follows. Synthesizes alpha-1,4-glucan chains using ADP-glucose. The polypeptide is Glycogen synthase 1 (Methylococcus capsulatus (strain ATCC 33009 / NCIMB 11132 / Bath)).